Consider the following 264-residue polypeptide: Potassium channel regulatory protein (264 aa).

A BTB domain is found at aspartate 5–serine 74.

As to quaternary structure, can form homooligomers. Interacts with KCNA1 (via cytoplasmic N-terminal domain) and KCNA4.

It localises to the endoplasmic reticulum. Functionally, inhibits potassium fluxes in cells. May regulate Kv1 family channel proteins by retaining a fraction of channels in endomembranes. The chain is Potassium channel regulatory protein (Kcnrg) from Mus musculus (Mouse).